The primary structure comprises 358 residues: Protein FAM187B (358 aa).

The first 17 residues, 1–17 (MLATLWLVGLSLPMLWA), serve as a signal peptide directing secretion. At 18 to 322 (QRLISCPYKN…DKADSVLRRL (305 aa)) the chain is on the extracellular side. Asn127 carries N-linked (GlcNAc...) asparagine glycosylation. Residues 323–343 (KLMVLSISVLAVGGLLCKVVF) form a helical membrane-spanning segment. Residues 344 to 358 (RPVCGKKRSQVLLVK) are Cytoplasmic-facing.

Belongs to the FAM187 family.

Its subcellular location is the membrane. The polypeptide is Protein FAM187B (Fam187b) (Mus musculus (Mouse)).